Here is a 213-residue protein sequence, read N- to C-terminus: Orotate phosphoribosyltransferase (213 aa).

Residue K26 coordinates 5-phospho-alpha-D-ribose 1-diphosphate. 34–35 provides a ligand contact to orotate; the sequence is FF. 5-phospho-alpha-D-ribose 1-diphosphate contacts are provided by residues 72-73, R99, K100, K103, H105, and 124-132; these read YK and DDVITAGTA. 2 residues coordinate orotate: T128 and R156.

It belongs to the purine/pyrimidine phosphoribosyltransferase family. PyrE subfamily. As to quaternary structure, homodimer. Mg(2+) is required as a cofactor.

The enzyme catalyses orotidine 5'-phosphate + diphosphate = orotate + 5-phospho-alpha-D-ribose 1-diphosphate. Its pathway is pyrimidine metabolism; UMP biosynthesis via de novo pathway; UMP from orotate: step 1/2. Functionally, catalyzes the transfer of a ribosyl phosphate group from 5-phosphoribose 1-diphosphate to orotate, leading to the formation of orotidine monophosphate (OMP). This chain is Orotate phosphoribosyltransferase, found in Klebsiella pneumoniae subsp. pneumoniae (strain ATCC 700721 / MGH 78578).